The sequence spans 495 residues: Sialin (495 aa).

A disordered region spans residues 1 to 24 (MKSPVSDLAPSDGEEGSDRTPLLQ). At serine 3 the chain carries Phosphoserine. The Dileucine internalization motif motif lies at 22 to 23 (LL). A helical membrane pass occupies residues 42-62 (LAFLSFFGFFVLYSLRVNLSV). N-linked (GlcNAc...) asparagine glycosylation is found at asparagine 71, asparagine 77, and asparagine 95. The next 11 membrane-spanning stretches (helical) occupy residues 110–130 (WILG…GYVA), 137–157 (LLLG…PLAA), 159–179 (FGVG…GVTY), 201–221 (ISYA…GVIC), 228–248 (YVFY…ICLV), 289–309 (LPLW…YTLL), 329–349 (FLSA…GQAA), 366–386 (VFSL…GFIG), 392–412 (AVAF…GFSI), 424–444 (ILLG…PIIA), and 458–478 (TVFC…TLFA).

It belongs to the major facilitator superfamily. Sodium/anion cotransporter family. In terms of tissue distribution, significantly expressed in lung endothelial cells, and much less in liver.

It is found in the basolateral cell membrane. It localises to the cytoplasmic vesicle. The protein localises to the secretory vesicle. The protein resides in the synaptic vesicle membrane. Its subcellular location is the lysosome membrane. It catalyses the reaction N-acetylneuraminate(in) + H(+)(in) = N-acetylneuraminate(out) + H(+)(out). The enzyme catalyses D-glucuronate(out) + H(+)(out) = D-glucuronate(in) + H(+)(in). The catalysed reaction is 2 nitrate(out) + H(+)(out) = 2 nitrate(in) + H(+)(in). It carries out the reaction L-aspartate(out) = L-aspartate(in). It catalyses the reaction L-glutamate(out) = L-glutamate(in). The enzyme catalyses N-acetyl-L-aspartyl-L-glutamate(out) = N-acetyl-L-aspartyl-L-glutamate(in). Its function is as follows. Multifunctional anion transporter that operates via two distinct transport mechanisms, namely proton-coupled anion cotransport and membrane potential-dependent anion transport. Electroneutral proton-coupled acidic monosaccharide symporter, with a sugar to proton stoichiometry of 1:1. Exports glucuronic acid and free sialic acid derived from sialoglycoconjugate degradation out of lysosomes, driven by outwardly directed lysosomal pH gradient. May regulate lysosome function and metabolism of sialylated conjugates that impact oligodendrocyte lineage differentiation and myelinogenesis in the central nervous system. Electrogenic proton-coupled nitrate symporter that transports nitrate ions across the basolateral membrane of salivary gland acinar cells, with nitrate to proton stoichiometry of 2:1. May contribute to nitrate clearance from serum by salivary glands, where it is further concentrated and secreted in the saliva. Uses membrane potential to drive the uptake of acidic amino acids and peptides into synaptic vesicles. Responsible for synaptic vesicular storage of L-aspartate and L-glutamate in pinealocytes as well as vesicular uptake of N-acetyl-L-aspartyl-L-glutamate neuropeptide, relevant to aspartegic-associated glutamatergic neurotransmission and activation of metabotropic receptors that inhibit subsequent transmitter release. Receptor for CM101, a polysaccharide produced by group B Streptococcus with antipathoangiogenic properties. In Ovis aries (Sheep), this protein is Sialin (SLC17A5).